The sequence spans 341 residues: Cell wall mannoprotein PIR1 (341 aa).

An N-terminal signal peptide occupies residues 1–18 (MQYKKSLVASALVTTSLA). The propeptide occupies 19 to 63 (AYAPKDPWSTLTPSATYKGGITDYSSTFGIAVEPIATTASSKAKR). 8 PIR1/2/3 repeats span residues 64–82 (AAAI…TKTT), 83–101 (AAAV…TKTK), 102–120 (AAAV…TKTT), 126–144 (AAAV…TKTK), 145–163 (AAAV…TKTT), 164–182 (AAAV…TKTT), 183–201 (AAAV…TNTT), and 202–220 (VAPV…TLTS).

It belongs to the PIR protein family. Post-translationally, covalently linked to beta-1,3-glucan of the inner cell wall layer via an alkali-sensitive ester linkage between the gamma-carboxyl group of glutamic acids, arising from specific glutamines within the PIR1/2/3 repeats, and hydroxyl groups of glucoses of beta-1,3-glucan chains. In terms of processing, O-glycosylated. Extensively O-mannosylated.

It localises to the secreted. Its subcellular location is the cell wall. Its function is as follows. Component of the outer cell wall layer. Required for stability of the cell wall and for optimal growth. Required for resistance against several antifungal and cell wall-perturbing agents and for tolerance to heat shock. The protein is Cell wall mannoprotein PIR1 (PIR1) of Saccharomyces cerevisiae (strain RM11-1a) (Baker's yeast).